We begin with the raw amino-acid sequence, 96 residues long: Small ribosomal subunit protein bS6 (96 aa).

Belongs to the bacterial ribosomal protein bS6 family.

Binds together with bS18 to 16S ribosomal RNA. The chain is Small ribosomal subunit protein bS6 from Heliobacterium modesticaldum (strain ATCC 51547 / Ice1).